Reading from the N-terminus, the 214-residue chain is ATP-dependent Clp protease proteolytic subunit (214 aa).

Ser-110 functions as the Nucleophile in the catalytic mechanism. His-135 is an active-site residue.

Belongs to the peptidase S14 family. As to quaternary structure, fourteen ClpP subunits assemble into 2 heptameric rings which stack back to back to give a disk-like structure with a central cavity, resembling the structure of eukaryotic proteasomes.

It localises to the cytoplasm. The enzyme catalyses Hydrolysis of proteins to small peptides in the presence of ATP and magnesium. alpha-casein is the usual test substrate. In the absence of ATP, only oligopeptides shorter than five residues are hydrolyzed (such as succinyl-Leu-Tyr-|-NHMec, and Leu-Tyr-Leu-|-Tyr-Trp, in which cleavage of the -Tyr-|-Leu- and -Tyr-|-Trp bonds also occurs).. In terms of biological role, cleaves peptides in various proteins in a process that requires ATP hydrolysis. Has a chymotrypsin-like activity. Plays a major role in the degradation of misfolded proteins. The polypeptide is ATP-dependent Clp protease proteolytic subunit (Legionella pneumophila (strain Corby)).